Reading from the N-terminus, the 321-residue chain is Probable DNA polymerase III subunit delta (321 aa).

The protein belongs to the DNA polymerase HolA subunit family. Component of the DNA clamp loading complex consisting of tau(3):delta(1):delta'(1). The DNA polymerase III holoenzyme complex contains at least 10 different subunits organized into 3 functionally essential subassemblies: the Pol III core, the beta sliding clamp processivity factor and the clamp-loading complex. The Pol III core (subunits alpha, epsilon and theta) contains the polymerase and the 3'-5' exonuclease proofreading activities. The polymerase is tethered to the template via the dimeric beta sliding clamp processivity factor. The DNA clamp-loading complex assembles the beta sliding clamp onto the primed template and plays a central role in the organization and communication at the replication fork.

It catalyses the reaction DNA(n) + a 2'-deoxyribonucleoside 5'-triphosphate = DNA(n+1) + diphosphate. Functionally, part of the beta sliding clamp loading complex, which hydrolyzes ATP to load the beta clamp onto primed DNA to form the DNA replication pre-initiation complex. DNA polymerase III is a complex, multichain enzyme responsible for most of the replicative synthesis in bacteria. This DNA polymerase also exhibits 3'-5' exonuclease activity. The delta subunit is the wrench that will open the beta subunit dimer. The DNA clamp loading complex (tau(3),delta,delta') is thought to load beta dimers onto DNA by binding ATP which alters the complex's conformation so it can bind beta sliding clamp dimers and open them at one interface. Primed DNA is recognized, ATP is hydrolyzed releasing the clamp loading complex and closing the beta sliding clamp ring around the primed DNA. In Rickettsia prowazekii (strain Madrid E), this protein is Probable DNA polymerase III subunit delta.